Consider the following 451-residue polypeptide: 2,4-dinitrotoluene dioxygenase system, large oxygenase component (451 aa).

The 85-residue stretch at 42 to 126 (WLFLTHDSLI…LQSVPFEKEL (85 aa)) folds into the Rieske domain. [2Fe-2S] cluster contacts are provided by Cys-84, His-86, Cys-104, and His-107. Positions 211, 216, and 365 each coordinate Fe cation.

This sequence belongs to the bacterial ring-hydroxylating dioxygenase alpha subunit family. The 2,4-dinitrotoluene dioxygenase (DNTDO) multicomponent enzyme system is composed of an electron transfer component and a dioxygenase component (iron sulfur protein (ISP)). The electron transfer component is composed of a ferredoxin reductase (DntAa) and a ferredoxin (DntAb), and the dioxygenase component is formed of a large alpha subunit (DntAc) and a small beta subunit (DntAd). [2Fe-2S] cluster is required as a cofactor. Requires Fe(2+) as cofactor.

It carries out the reaction 2,4-dinitrotoluene + NADH + O2 = 4-methyl-5-nitrocatechol + nitrite + NAD(+). In terms of biological role, component of the 2,4-dinitrotoluene dioxygenase (DNTDO) multicomponent enzyme system which catalyzes the incorporation of both atoms of molecular oxygen into 2,4-dinitrotoluene (DNT) to form 4-methyl-5-nitrocatechol (MNC) and nitrite. The alpha subunit has a catalytic role in the holoenzyme. Also able to convert naphthalene to cis-(1R,2S)-dihydroxy-1,2-dihydronaphthalene. The polypeptide is 2,4-dinitrotoluene dioxygenase system, large oxygenase component (Burkholderia sp. (strain RASC)).